We begin with the raw amino-acid sequence, 95 residues long: Protein TusB (95 aa).

It belongs to the DsrH/TusB family. In terms of assembly, heterohexamer, formed by a dimer of trimers. The hexameric TusBCD complex contains 2 copies each of TusB, TusC and TusD. The TusBCD complex interacts with TusE.

The protein localises to the cytoplasm. Its function is as follows. Part of a sulfur-relay system required for 2-thiolation of 5-methylaminomethyl-2-thiouridine (mnm(5)s(2)U) at tRNA wobble positions. The chain is Protein TusB from Shigella flexneri.